The sequence spans 85 residues: Toxin TdNa9 (85 aa).

A signal peptide spans 1 to 21 (MLKFAIAVALLLFIGLELREA). Residues 22–84 (RDGYPQSKVN…YGDPGTKPCM (63 aa)) form the LCN-type CS-alpha/beta domain. Disulfide bonds link cysteine 33/cysteine 83, cysteine 37/cysteine 58, cysteine 43/cysteine 63, and cysteine 47/cysteine 65.

Belongs to the long (4 C-C) scorpion toxin superfamily. Sodium channel inhibitor family. Beta subfamily. Expressed by the venom gland.

The protein localises to the secreted. Its function is as follows. Alpha toxins bind voltage-independently at site-3 of sodium channels (Nav) and inhibit the inactivation of the activated channels, thereby blocking neuronal transmission. This toxin binds, in vitro, to sodium channels and inhibits the inactivation of the activated channels. Seems not toxic to mice, crickets and sweet-water shrimps. The protein is Toxin TdNa9 of Tityus discrepans (Venezuelan scorpion).